The primary structure comprises 124 residues: Fluoride-specific ion channel FluC (124 aa).

3 helical membrane-spanning segments follow: residues 5–27 (LFVALGGSIGAVFRYLLSIFMLQ), 70–90 (VGLLGALTTFSTFSNETLLLI), and 95–115 (WIKAFFNIALNLCLCIFMVYL). Na(+)-binding residues include Gly-74 and Thr-77.

Belongs to the fluoride channel Fluc/FEX (TC 1.A.43) family.

It is found in the cell inner membrane. It carries out the reaction fluoride(in) = fluoride(out). With respect to regulation, na(+) is not transported, but it plays an essential structural role and its presence is essential for fluoride channel function. Its function is as follows. Fluoride-specific ion channel. Important for reducing fluoride concentration in the cell, thus reducing its toxicity. In Shewanella sediminis (strain HAW-EB3), this protein is Fluoride-specific ion channel FluC.